The sequence spans 488 residues: Probable glycine dehydrogenase (decarboxylating) subunit 2 (488 aa).

At lysine 274 the chain carries N6-(pyridoxal phosphate)lysine.

Belongs to the GcvP family. C-terminal subunit subfamily. As to quaternary structure, the glycine cleavage system is composed of four proteins: P, T, L and H. In this organism, the P 'protein' is a heterodimer of two subunits. The cofactor is pyridoxal 5'-phosphate.

The enzyme catalyses N(6)-[(R)-lipoyl]-L-lysyl-[glycine-cleavage complex H protein] + glycine + H(+) = N(6)-[(R)-S(8)-aminomethyldihydrolipoyl]-L-lysyl-[glycine-cleavage complex H protein] + CO2. The glycine cleavage system catalyzes the degradation of glycine. The P protein binds the alpha-amino group of glycine through its pyridoxal phosphate cofactor; CO(2) is released and the remaining methylamine moiety is then transferred to the lipoamide cofactor of the H protein. This is Probable glycine dehydrogenase (decarboxylating) subunit 2 from Listeria welshimeri serovar 6b (strain ATCC 35897 / DSM 20650 / CCUG 15529 / CIP 8149 / NCTC 11857 / SLCC 5334 / V8).